Reading from the N-terminus, the 348-residue chain is NADH-quinone oxidoreductase subunit H (348 aa).

8 helical membrane-spanning segments follow: residues 10-30 (LPFL…LVLV), 82-102 (GVFL…WAVI), 115-135 (VGLL…IMGG), 161-181 (IGFV…TTIV), 199-219 (FLDW…ISAL), 251-271 (LFFL…TILF), 287-307 (IPGV…FAIV), and 322-342 (LGWK…AAFL).

Belongs to the complex I subunit 1 family. In terms of assembly, NDH-1 is composed of 14 different subunits. Subunits NuoA, H, J, K, L, M, N constitute the membrane sector of the complex.

The protein localises to the cell inner membrane. It carries out the reaction a quinone + NADH + 5 H(+)(in) = a quinol + NAD(+) + 4 H(+)(out). In terms of biological role, NDH-1 shuttles electrons from NADH, via FMN and iron-sulfur (Fe-S) centers, to quinones in the respiratory chain. The immediate electron acceptor for the enzyme in this species is believed to be ubiquinone. Couples the redox reaction to proton translocation (for every two electrons transferred, four hydrogen ions are translocated across the cytoplasmic membrane), and thus conserves the redox energy in a proton gradient. This subunit may bind ubiquinone. The polypeptide is NADH-quinone oxidoreductase subunit H (Bartonella tribocorum (strain CIP 105476 / IBS 506)).